A 728-amino-acid polypeptide reads, in one-letter code: Putative ankyrin repeat protein L271 (728 aa).

2 ANK repeats span residues 142–171 and 173–198; these read SDVN…NIKT and IYSA…DIIL. Residues 244-267 are compositionally biased toward low complexity; the sequence is STKSTKSSGSPKSIKPKKSNQNNN. Residues 244–271 are disordered; sequence STKSTKSSGSPKSIKPKKSNQNNNAKIN. The stretch at 292–338 forms a coiled coil; the sequence is TVDKMSSAKEQALNVYKEIENMENFILNKINITKKKALDKIKEIENI. ANK repeat units follow at residues 358–383, 384–414, 477–510, 514–543, 547–576, 594–626, 630–659, and 663–696; these read TNTD…RQGY, DINK…NYEQ, DDLS…NINS, IGRS…DYSF, NGDT…DTKT, DIKT…NVSS, TKKT…NINS, and LGKT…KILI.

In Acanthamoeba polyphaga (Amoeba), this protein is Putative ankyrin repeat protein L271.